Reading from the N-terminus, the 432-residue chain is Glutamyl-tRNA reductase (432 aa).

Residues 49-52 (TCNR), S101, 106-108 (ESQ), and Q112 each bind substrate. Residue C50 is the Nucleophile of the active site. 181–186 (GTGETI) provides a ligand contact to NADP(+). The disordered stretch occupies residues 410-432 (KPGYHHPTLQTTIVKTDETDPAS).

This sequence belongs to the glutamyl-tRNA reductase family. As to quaternary structure, homodimer.

The catalysed reaction is (S)-4-amino-5-oxopentanoate + tRNA(Glu) + NADP(+) = L-glutamyl-tRNA(Glu) + NADPH + H(+). Its pathway is porphyrin-containing compound metabolism; protoporphyrin-IX biosynthesis; 5-aminolevulinate from L-glutamyl-tRNA(Glu): step 1/2. Catalyzes the NADPH-dependent reduction of glutamyl-tRNA(Glu) to glutamate 1-semialdehyde (GSA). The polypeptide is Glutamyl-tRNA reductase (Xylella fastidiosa (strain 9a5c)).